Here is a 311-residue protein sequence, read N- to C-terminus: Olfactory receptor 1L4 (311 aa).

At 1-26 the chain is on the extracellular side; that stretch reads METKNYSSSTSGFILLGLSSNPKLQK. N5 carries N-linked (GlcNAc...) asparagine glycosylation. Residues 27-50 traverse the membrane as a helical segment; that stretch reads PLFAIFLIMYLLTAVGNVLIILAI. Over 51-58 the chain is Cytoplasmic; that stretch reads YSDPRLHT. A helical membrane pass occupies residues 59–80; sequence PMYFFLSNLSFMDICFTTVIVP. At 81 to 101 the chain is on the extracellular side; that stretch reads KMLVNFLSETKIISYVGCLIQ. A disulfide bridge connects residues C98 and C190. Residues 102 to 121 traverse the membrane as a helical segment; sequence MYFFMAFGNTDSYLLASMAI. The Cytoplasmic portion of the chain corresponds to 122–140; that stretch reads DRLVAICNPLHYDVVMKPW. A helical membrane pass occupies residues 141–159; that stretch reads HCLLMLLGSCSISHLHSLF. Residues 160-197 are Extracellular-facing; that stretch reads RVLLMSRLSFCASHIIKHFFCDTQPVLKLSCSDTSSSQ. The chain crosses the membrane as a helical span at residues 198 to 220; it reads MVVMTETLAVIVTPFLCTIFSYL. The Cytoplasmic segment spans residues 221-237; that stretch reads QIIVTVLRIPSAAGKWK. A helical membrane pass occupies residues 238–260; sequence AFSTCGSHLTVVVLFYGSVIYVY. Residues 261-273 lie on the Extracellular side of the membrane; that stretch reads FRPLSMYSVMKGR. Residues 274–293 traverse the membrane as a helical segment; it reads VATVMYTVVTPMLNPFIYSL. Topologically, residues 294–311 are cytoplasmic; that stretch reads RNKDMKRGLKKLRHRIYS.

Belongs to the G-protein coupled receptor 1 family.

It localises to the cell membrane. In terms of biological role, odorant receptor. The chain is Olfactory receptor 1L4 (OR1L4) from Homo sapiens (Human).